The chain runs to 537 residues: MLRKWEARVKQIEERASHYERKPLSSVYRPRLAKPEEPSSIWKLFHRQNQAFNFVKSCKESVHVFALECKRGNGQRIYLVTSYAQLWFYYKTRKTLLHCYEVIPENAVCKLYFDLEFNKLANPGADGKMMVALLIQHVCKALEEFYNVQCSAEDVFNLDSSTEEKFSRHLIFQLHNVAFKDNRHAGNFVRKILQPALHLIAEDDEAKVPEAVGQDASGFSVTPLKQEISEAREKVGLPKQCDPDLSFLVVKNHMGEKCLFVDLGVYTKNRNFRLYQSSKIGKCVSLEVAEDNRFIPKQSKDISEENQYFLSSLVSNVRFSDTLRVLTCHPSQTKRKRAECFNSTGTSVESIEGFQGSPYPEVDQFVLSLVNKHDIKGGIRRWNYFFPEELLVYDICKYRWCENIGRAHKSNNIMILVDLKNEVWYQKCHDPVCKAQNFKSTCSPLPTEVSLLFLLKDEDFTSGETDDTSTSLTKDSQTPPSCNLSAGGLSAAAWDDEDDALFLEATEDAEFADAADKSLGSMDDIPDELIIEALQNS.

Residues 1-22 adopt a coiled-coil conformation; that stretch reads MLRKWEARVKQIEERASHYERK. Substrate-binding positions include Arg-76, 114–116, 165–169, 270–273, and Lys-279; these read DLE, KFSRH, and RNFR. Mn(2+) is bound by residues Asp-114 and Glu-116. 4 residues coordinate Zn(2+): Cys-401, His-408, Cys-428, and Cys-433. A Zinc knuckle motif motif is present at residues 401 to 434; it reads CENIGRAHKSNNIMILVDLKNEVWYQKCHDPVCK. The segment at 462-481 is disordered; it reads SGETDDTSTSLTKDSQTPPS. The segment at 462-536 is interaction with RPA1; it reads SGETDDTSTS…DELIIEALQN (75 aa). Low complexity predominate over residues 468–478; the sequence is TSTSLTKDSQT. 2 short sequence motifs (RPA1-binding motif) span residues 494–507 and 524–532; these read WDDE…EATE and DIPDELIIE.

The protein belongs to the eukaryotic-type primase small subunit family. Interacts with RPA1; leading to recruitment to chromatin and stimulate DNA primase activity. Interacts with SSBP1. Interacts with POLDIP2; leading to enhance DNA polymerase activity. Mn(2+) serves as cofactor.

It localises to the nucleus. The protein resides in the mitochondrion matrix. Its subcellular location is the chromosome. The enzyme catalyses ssDNA + n NTP = ssDNA/pppN(pN)n-1 hybrid + (n-1) diphosphate.. The catalysed reaction is DNA(n) + a 2'-deoxyribonucleoside 5'-triphosphate = DNA(n+1) + diphosphate. DNA primase and DNA polymerase required to tolerate replication-stalling lesions by bypassing them. Required to facilitate mitochondrial and nuclear replication fork progression by initiating de novo DNA synthesis using dNTPs and acting as an error-prone DNA polymerase able to bypass certain DNA lesions. Shows a high capacity to tolerate DNA damage lesions such as 8oxoG and abasic sites in DNA. Provides different translesion synthesis alternatives when DNA replication is stalled: able to synthesize DNA primers downstream of lesions, such as ultraviolet (UV) lesions, R-loops and G-quadruplexes, to allow DNA replication to continue. Can also realign primers ahead of 'unreadable lesions' such as abasic sites and 6-4 photoproduct (6-4 pyrimidine-pyrimidinone), thereby skipping the lesion. Repriming avoids fork degradation while leading to accumulation of internal ssDNA gaps behind the forks. Also able to incorporate nucleotides opposite DNA lesions such as 8oxoG, like a regular translesion synthesis DNA polymerase. Also required for reinitiating stalled forks after UV damage during nuclear DNA replication. Required for mitochondrial DNA (mtDNA) synthesis and replication, by reinitiating synthesis after UV damage or in the presence of chain-terminating nucleotides. Prevents APOBEC family-mediated DNA mutagenesis by repriming downstream of abasic site to prohibit error-prone translesion synthesis. Has non-overlapping function with POLH. In addition to its role in DNA damage response, also required to maintain efficient nuclear and mitochondrial DNA replication in unperturbed cells. The protein is DNA-directed primase/polymerase protein of Mus musculus (Mouse).